A 159-amino-acid polypeptide reads, in one-letter code: Small ribosomal subunit protein uS4 (159 aa).

Positions 106-158 (RRLQTIVYRMGLAKSIYHARQLIVHGHIAIEGRRVTSPGFLVPRELEDKITLV) constitute an S4 RNA-binding domain.

It belongs to the universal ribosomal protein uS4 family. In terms of assembly, part of the 30S ribosomal subunit. Contacts protein S5. The interaction surface between S4 and S5 is involved in control of translational fidelity.

Its function is as follows. One of the primary rRNA binding proteins, it binds directly to 16S rRNA where it nucleates assembly of the body of the 30S subunit. Functionally, with S5 and S12 plays an important role in translational accuracy. This is Small ribosomal subunit protein uS4 from Pyrobaculum arsenaticum (strain DSM 13514 / JCM 11321 / PZ6).